The following is a 285-amino-acid chain: NAC domain-containing protein 92 (285 aa).

Residues 20 to 170 enclose the NAC domain; it reads LPPGFRFHPT…EWVICRVFQK (151 aa). Residues 117–176 mediate DNA binding; it reads VGMKKTLVFYKGRAPKGVKTNWVMHEYRLEGKYCIENLPQTAKNEWVICRVFQKRADGTK.

In terms of assembly, forms homodimers. Interacts with GLK1 and GLK2. Interacts with NLA. Ubiquitinated by NLA. Ubiquitination of NAC92 leads to its degradation by the proteasome during leaf senescence under nitrogen deficiency. Mostly expressed in roots and flowers, and, to a lower extent, in shoots and leaves. Particularly expressed in old and senescing tissues.

It localises to the nucleus. Transcription activator that binds to DNA in promoters of target genes on a specific bipartite motif 5'-[ACG][CA]GT[AG](5-6n)[CT]AC[AG]-3'. Promotes lateral root development. Triggers the expression of senescence-associated genes during age-, salt- and dark-induced senescence through a regulatory network that may involve cross-talk with salt- and H(2)O(2)-dependent signaling pathways. Also regulates genes during seed germination. Positively regulates aging-induced cell death. Involved in age-related resistance (ARR) against Pseudomonas syringae pv. tomato and Hyaloperonospora arabidopsidis. Antagonizes GLK1 and GLK2 transcriptional activity, shifting the balance from chloroplast maintenance towards deterioration during leaf senescence. Promotes the expression of senescence-associated genes, including ENDO1/BFN1, SWEET15/SAG29 and SINA1/At3g13672, during senescence onset. The sequence is that of NAC domain-containing protein 92 from Arabidopsis thaliana (Mouse-ear cress).